Here is a 209-residue protein sequence, read N- to C-terminus: Large ribosomal subunit protein uL3 (209 aa).

The disordered stretch occupies residues 128-163 (AHRGPMTHGSKFHRAVGSMGASSDPSRTFKNKRMPG).

Belongs to the universal ribosomal protein uL3 family. In terms of assembly, part of the 50S ribosomal subunit. Forms a cluster with proteins L14 and L19.

Functionally, one of the primary rRNA binding proteins, it binds directly near the 3'-end of the 23S rRNA, where it nucleates assembly of the 50S subunit. This Clostridium botulinum (strain 657 / Type Ba4) protein is Large ribosomal subunit protein uL3.